The primary structure comprises 87 residues: Putative regulatory protein BH2513 (87 aa).

The protein belongs to the RemA family.

The sequence is that of Putative regulatory protein BH2513 from Halalkalibacterium halodurans (strain ATCC BAA-125 / DSM 18197 / FERM 7344 / JCM 9153 / C-125) (Bacillus halodurans).